Here is a 231-residue protein sequence, read N- to C-terminus: 7-cyano-7-deazaguanine synthase (231 aa).

8-18 (FSGGQDSTTCL) provides a ligand contact to ATP. C188, C197, C200, and C203 together coordinate Zn(2+).

The protein belongs to the QueC family. Requires Zn(2+) as cofactor.

It carries out the reaction 7-carboxy-7-deazaguanine + NH4(+) + ATP = 7-cyano-7-deazaguanine + ADP + phosphate + H2O + H(+). Its pathway is purine metabolism; 7-cyano-7-deazaguanine biosynthesis. Its function is as follows. Catalyzes the ATP-dependent conversion of 7-carboxy-7-deazaguanine (CDG) to 7-cyano-7-deazaguanine (preQ(0)). The sequence is that of 7-cyano-7-deazaguanine synthase from Escherichia coli (strain SMS-3-5 / SECEC).